The sequence spans 120 residues: Late cornified envelope-like proline-rich protein 1 (120 aa).

The protein belongs to the cornifin (SPRR) family.

This chain is Late cornified envelope-like proline-rich protein 1 (Lelp1), found in Mus musculus (Mouse).